The following is a 503-amino-acid chain: Lysine--tRNA ligase (503 aa).

Mg(2+) contacts are provided by E413 and E420.

The protein belongs to the class-II aminoacyl-tRNA synthetase family. As to quaternary structure, homodimer. Mg(2+) serves as cofactor.

The protein resides in the cytoplasm. It carries out the reaction tRNA(Lys) + L-lysine + ATP = L-lysyl-tRNA(Lys) + AMP + diphosphate. The sequence is that of Lysine--tRNA ligase from Actinobacillus succinogenes (strain ATCC 55618 / DSM 22257 / CCUG 43843 / 130Z).